The sequence spans 244 residues: MAAEKILTPESQLKKSKAQQKTAEQVAAERAARKAANKEKRAIILERNAAYQKEYETAERNIIQAKRDAKAAGSYYVEAQHKLVFVVRIKGINKIPPKPRKVLQLLRLTRINSGTFVKVTKATLELLKLIEPYVAYGYPSYSTIRQLVYKRGFGKINKQRVPLSDNAIIEANLGKYGILSIDDLIHEIITVGPHFKQANNFLWPFKLSNPSGGWGVPRKFKHFIQGGSFGNREEFINKLVKSMN.

Residues 1 to 26 are disordered; that stretch reads MAAEKILTPESQLKKSKAQQKTAEQV.

It belongs to the universal ribosomal protein uL30 family. As to quaternary structure, component of the large ribosomal subunit (LSU). Mature yeast ribosomes consist of a small (40S) and a large (60S) subunit. The 40S small subunit contains 1 molecule of ribosomal RNA (18S rRNA) and 33 different proteins (encoded by 57 genes). The large 60S subunit contains 3 rRNA molecules (25S, 5.8S and 5S rRNA) and 46 different proteins (encoded by 81 genes).

The protein resides in the cytoplasm. Its function is as follows. Component of the ribosome, a large ribonucleoprotein complex responsible for the synthesis of proteins in the cell. The small ribosomal subunit (SSU) binds messenger RNAs (mRNAs) and translates the encoded message by selecting cognate aminoacyl-transfer RNA (tRNA) molecules. The large subunit (LSU) contains the ribosomal catalytic site termed the peptidyl transferase center (PTC), which catalyzes the formation of peptide bonds, thereby polymerizing the amino acids delivered by tRNAs into a polypeptide chain. The nascent polypeptides leave the ribosome through a tunnel in the LSU and interact with protein factors that function in enzymatic processing, targeting, and the membrane insertion of nascent chains at the exit of the ribosomal tunnel. In Saccharomyces cerevisiae (strain ATCC 204508 / S288c) (Baker's yeast), this protein is Large ribosomal subunit protein uL30A.